Here is a 348-residue protein sequence, read N- to C-terminus: Casein kinase II subunit alpha (348 aa).

Positions 55–340 (YEIVRKIGRG…PLEAMEHPFF (286 aa)) constitute a Protein kinase domain. ATP-binding positions include 61–69 (IGRGKFSEV) and lysine 84. Residue aspartate 172 is the Proton acceptor of the active site.

The protein belongs to the protein kinase superfamily. Ser/Thr protein kinase family. CK2 subfamily. In terms of assembly, tetramer of two alpha and two beta chains.

The protein resides in the cytoplasm. It catalyses the reaction L-seryl-[protein] + ATP = O-phospho-L-seryl-[protein] + ADP + H(+). It carries out the reaction L-threonyl-[protein] + ATP = O-phospho-L-threonyl-[protein] + ADP + H(+). Its function is as follows. Casein kinases are operationally defined by their preferential utilization of acidic proteins such as caseins as substrates. The alpha chain contains the catalytic site. This chain is Casein kinase II subunit alpha, found in Theileria annulata.